Reading from the N-terminus, the 187-residue chain is Imidazoleglycerol-phosphate dehydratase (187 aa).

The protein belongs to the imidazoleglycerol-phosphate dehydratase family.

The protein resides in the cytoplasm. It carries out the reaction D-erythro-1-(imidazol-4-yl)glycerol 3-phosphate = 3-(imidazol-4-yl)-2-oxopropyl phosphate + H2O. The protein operates within amino-acid biosynthesis; L-histidine biosynthesis; L-histidine from 5-phospho-alpha-D-ribose 1-diphosphate: step 6/9. The chain is Imidazoleglycerol-phosphate dehydratase from Pyrobaculum calidifontis (strain DSM 21063 / JCM 11548 / VA1).